We begin with the raw amino-acid sequence, 264 residues long: Small ribosomal subunit protein uS2 (264 aa).

Residues 228–264 (QLDAEDDYEDYDGSEYDDDYEETEYTDAVIPDEETEE) form a disordered region. Over residues 230–264 (DAEDDYEDYDGSEYDDDYEETEYTDAVIPDEETEE) the composition is skewed to acidic residues.

Belongs to the universal ribosomal protein uS2 family.

The chain is Small ribosomal subunit protein uS2 from Nostoc punctiforme (strain ATCC 29133 / PCC 73102).